The chain runs to 197 residues: Translation machinery-associated protein 22 (197 aa).

The region spanning 102–173 (VQIKRVERNK…DVKEWLLEVY (72 aa)) is the SUI1 domain.

It belongs to the DENR family. In terms of assembly, interacts with the 40S ribosomal subunit.

Its subcellular location is the cytoplasm. The polypeptide is Translation machinery-associated protein 22 (tma22) (Aspergillus niger (strain ATCC MYA-4892 / CBS 513.88 / FGSC A1513)).